A 34-amino-acid polypeptide reads, in one-letter code: Brevinin-2GHa (34 aa).

Cysteine 27 and cysteine 33 are joined by a disulfide.

As to expression, expressed by the skin glands.

The protein resides in the secreted. Functionally, antimicrobial peptide. Active against the Gram-positive bacteria S.aureus FDA209P (MIC=14.9 ug/ml) and B.subtilis ATCC 6633 (MIC&gt;64 ug/ml), but not active against the Gram-negative bacterium E.coli or the fungus C.albicans. The protein is Brevinin-2GHa of Sylvirana guentheri (Gunther's frog).